Reading from the N-terminus, the 377-residue chain is Prostaglandin E synthase 2 (377 aa).

Residues 1-57 (MDPAARVVRALWPGGCALAWRLGGRPQPLLPTQSRAGFAGAAGGPSPVAAARKGSPR) lie on the Lumenal side of the membrane. The helical transmembrane segment at 58 to 74 (LLGAAALALGGALGLYH) threads the bilayer. The Cytoplasmic portion of the chain corresponds to 75-377 (TARWHLRAQD…RAITEASPAH (303 aa)). Residues 90–193 (SAAQLSLSSR…EIITYYPAMK (104 aa)) enclose the Glutaredoxin domain. At serine 95 the chain carries Phosphoserine. Glutathione contacts are provided by residues valine 148 and 164–165 (DS). The 115-residue stretch at 263–377 (YIVREGKFGA…RAITEASPAH (115 aa)) folds into the GST C-terminal domain.

This sequence belongs to the GST superfamily. Homodimer. May interact with CEBPB. Interacts with EXOSC10. In terms of processing, synthesized as a Golgi membrane-associated protein, and the proteolytic removal of the N-terminal hydrophobic domain leads to the formation of a mature cytosolic enzyme. Widely expressed. Expressed in the heart, including apex, inter-ventricular septum, both atria and ventricles, but not in the aorta. Also expressed in fetal heart. Detected in various regions of the brain: cerebellum; occipital, frontal and parietal lobes. Also expressed in the lymph nodes, skeletal muscle, kidney and trachea, but not in the thymus or lung. Overexpressed in colorectal cancer.

The protein localises to the golgi apparatus membrane. It localises to the cytoplasm. It is found in the perinuclear region. The catalysed reaction is prostaglandin H2 = prostaglandin E2. It carries out the reaction prostaglandin H2 = (12S)-hydroxy-(5Z,8E,10E)-heptadecatrienoate + malonaldehyde. It participates in lipid metabolism; prostaglandin biosynthesis. With respect to regulation, isomerase activity is increased by sulfhydril compounds. Dithiothreitol (DTT) is most effective, followed by dihydrolipoic acid, glutathione (GSH) and 2-mercaptoethanol. In terms of biological role, isomerase that catalyzes the conversion of PGH2 into the more stable prostaglandin E2 (PGE2) (in vitro). The biological function and the GSH-dependent property of PTGES2 is still under debate. In vivo, PTGES2 could form a complex with GSH and heme and would not participate in PGE2 synthesis but would catalyze the degradation of prostaglandin E2 H2 (PGH2) to 12(S)-hydroxy-5(Z),8(E),10(E)-heptadecatrienoic acid (HHT) and malondialdehyde (MDA). The protein is Prostaglandin E synthase 2 (PTGES2) of Homo sapiens (Human).